A 211-amino-acid chain; its full sequence is Imidazole glycerol phosphate synthase subunit HisH (211 aa).

The region spanning 1 to 211 (MIGIIDYGMG…VGIATGRGNG (211 aa)) is the Glutamine amidotransferase type-1 domain. The active-site Nucleophile is C79. Catalysis depends on residues H186 and E188.

As to quaternary structure, heterodimer of HisH and HisF.

The protein localises to the cytoplasm. It carries out the reaction 5-[(5-phospho-1-deoxy-D-ribulos-1-ylimino)methylamino]-1-(5-phospho-beta-D-ribosyl)imidazole-4-carboxamide + L-glutamine = D-erythro-1-(imidazol-4-yl)glycerol 3-phosphate + 5-amino-1-(5-phospho-beta-D-ribosyl)imidazole-4-carboxamide + L-glutamate + H(+). The enzyme catalyses L-glutamine + H2O = L-glutamate + NH4(+). Its pathway is amino-acid biosynthesis; L-histidine biosynthesis; L-histidine from 5-phospho-alpha-D-ribose 1-diphosphate: step 5/9. In terms of biological role, IGPS catalyzes the conversion of PRFAR and glutamine to IGP, AICAR and glutamate. The HisH subunit catalyzes the hydrolysis of glutamine to glutamate and ammonia as part of the synthesis of IGP and AICAR. The resulting ammonia molecule is channeled to the active site of HisF. The protein is Imidazole glycerol phosphate synthase subunit HisH of Geobacillus kaustophilus (strain HTA426).